The chain runs to 2958 residues: Protein CSF1 (2958 aa).

Residues 1–17 (MEAISQLRGVPLTHQKD) are Cytoplasmic-facing. The chain crosses the membrane as a helical; Signal-anchor for type II membrane protein span at residues 18-38 (FSWVFLVDWILTVVVCLTMIF). Residues 39–2958 (YMGRIYAYLV…QYVKILDDTH (2920 aa)) are Extracellular-facing. N-linked (GlcNAc...) asparagine glycosylation is found at N82, N117, N144, N271, N478, N530, N816, N821, N839, and N892. Residues 813 to 834 (GYQNSSLKNESEDKGPMKRSDL) form a disordered region. Residues 821–834 (NESEDKGPMKRSDL) show a composition bias toward basic and acidic residues. Positions 1175–1196 (MEPSRASFSEDDNDEEADPSSF) are disordered. Residues 1183–1192 (SEDDNDEEAD) show a composition bias toward acidic residues. Residues N1309, N1368, N1453, N1785, N1921, N2130, N2146, N2280, N2337, N2520, N2578, N2719, and N2869 are each glycosylated (N-linked (GlcNAc...) asparagine).

The protein belongs to the CSF1 family. As to quaternary structure, interacts with MCD4; CSF1 channels phosphatidylethanolamine to MCD4 in the endoplasmic reticulum at contact sites to support GPI anchor biosynthesis.

The protein resides in the cell membrane. Its subcellular location is the endoplasmic reticulum membrane. It is found in the mitochondrion membrane. Tube-forming lipid transport protein which provides phosphatidylethanolamine for glycosylphosphatidylinositol (GPI) anchor synthesis in the endoplasmic reticulum. Required for the glucose and other nutrients uptake at low temperature. This Saccharomyces cerevisiae (strain ATCC 204508 / S288c) (Baker's yeast) protein is Protein CSF1.